A 91-amino-acid chain; its full sequence is uncharacterized protein (91 aa).

Helical transmembrane passes span 6–26, 37–57, and 68–88; these read AAAV…INFF, MPVF…FVSI, and IVLN…GALL.

The protein localises to the cell membrane. This is an uncharacterized protein from Bacillus subtilis (strain 168).